The primary structure comprises 300 residues: Small ribosomal subunit protein uS2 (300 aa).

The tract at residues 278-300 (GEAQTGNEGWGTEAAAPAATTQW) is disordered.

Belongs to the universal ribosomal protein uS2 family. Component of the small ribosomal subunit. Mature ribosomes consist of a small (40S) and a large (60S) subunit. The 40S subunit contains about 33 different proteins and 1 molecule of RNA (18S). The 60S subunit contains about 49 different proteins and 3 molecules of RNA (25S, 5.8S and 5S). Interacts with rps21.

It is found in the cytoplasm. Functionally, required for the assembly and/or stability of the 40S ribosomal subunit. Required for the processing of the 20S rRNA-precursor to mature 18S rRNA in a late step of the maturation of 40S ribosomal subunits. The sequence is that of Small ribosomal subunit protein uS2 (rps0) from Pyrenophora tritici-repentis (strain Pt-1C-BFP) (Wheat tan spot fungus).